A 410-amino-acid polypeptide reads, in one-letter code: Cysteine desulfurase IscS (410 aa).

Residues 80–81 (AT), Asn160, Gln188, and 208–210 (SGH) each bind pyridoxal 5'-phosphate. At Lys211 the chain carries N6-(pyridoxal phosphate)lysine. Position 248 (Thr248) interacts with pyridoxal 5'-phosphate. Cys334 serves as the catalytic Cysteine persulfide intermediate. Cys334 contributes to the [2Fe-2S] cluster binding site.

It belongs to the class-V pyridoxal-phosphate-dependent aminotransferase family. NifS/IscS subfamily. Homodimer. Forms a heterotetramer with IscU, interacts with other sulfur acceptors. It depends on pyridoxal 5'-phosphate as a cofactor.

The protein localises to the cytoplasm. It catalyses the reaction (sulfur carrier)-H + L-cysteine = (sulfur carrier)-SH + L-alanine. It participates in cofactor biosynthesis; iron-sulfur cluster biosynthesis. Master enzyme that delivers sulfur to a number of partners involved in Fe-S cluster assembly, tRNA modification or cofactor biosynthesis. Catalyzes the removal of elemental sulfur atoms from cysteine to produce alanine. Functions as a sulfur delivery protein for Fe-S cluster synthesis onto IscU, an Fe-S scaffold assembly protein, as well as other S acceptor proteins. This is Cysteine desulfurase IscS from Rickettsia felis (strain ATCC VR-1525 / URRWXCal2) (Rickettsia azadi).